The primary structure comprises 724 residues: ATPase family protein 2 homolog (724 aa).

Residues 281–287 (PGSGKTL) and 503–508 (GCSKTL) contribute to the ATP site.

The protein belongs to the AAA ATPase family. AFG2 subfamily. As to quaternary structure, homohexamer; ATP binding induces oligomerization. Forms a ring-shaped particle of about 12 nm diameter, that displays 6-fold radial symmetry. Interacts (via N-terminus) with kinase air-2; the interaction is direct and inhibits air-2 kinase activity in an ATPase-dependent manner.

The protein localises to the cytoplasm. It catalyses the reaction ATP + H2O = ADP + phosphate + H(+). In terms of biological role, ATP-dependent chaperone which uses the energy provided by ATP hydrolysis to generate mechanical force to disassemble protein complexes. Required for various steps of embryonic mitosis including centrosome duplication, spindle assembly, ER dynamics and cell cycle progression. Regulates the stability and activity of kinase air-2, a component of the chromosomal passenger complex (CPC). Inhibits air-2 kinase activity from metaphase to late telophase and negatively regulates air-2 stability during mitotic exit. Controls ER transition into sheet-like structures at the onset of mitosis, possibly by regulating homotypic membrane fusion. This Caenorhabditis elegans protein is ATPase family protein 2 homolog.